Here is an 81-residue protein sequence, read N- to C-terminus: UPF0180 protein ABC2430 (81 aa).

This sequence belongs to the UPF0180 family.

The sequence is that of UPF0180 protein ABC2430 from Shouchella clausii (strain KSM-K16) (Alkalihalobacillus clausii).